We begin with the raw amino-acid sequence, 148 residues long: Putative pre-16S rRNA nuclease (148 aa).

The protein belongs to the YqgF nuclease family.

It localises to the cytoplasm. Its function is as follows. Could be a nuclease involved in processing of the 5'-end of pre-16S rRNA. The sequence is that of Putative pre-16S rRNA nuclease from Chlamydia trachomatis serovar L2 (strain ATCC VR-902B / DSM 19102 / 434/Bu).